Reading from the N-terminus, the 364-residue chain is Putative agmatine deiminase (364 aa).

Cys355 functions as the Amidino-cysteine intermediate in the catalytic mechanism.

The protein belongs to the agmatine deiminase family.

The enzyme catalyses agmatine + H2O = N-carbamoylputrescine + NH4(+). In Mycoplasma mycoides subsp. mycoides SC (strain CCUG 32753 / NCTC 10114 / PG1), this protein is Putative agmatine deiminase.